The primary structure comprises 398 residues: Large ribosomal subunit protein uL3 (398 aa).

Positions 1-10 are enriched in basic and acidic residues; it reads MSHRKFEAPR. The tract at residues 1–34 is disordered; the sequence is MSHRKFEAPRHGNLGFRPRKRAARHQGKVKSFPK. Basic residues predominate over residues 17-28; the sequence is RPRKRAARHQGK.

This sequence belongs to the universal ribosomal protein uL3 family.

Its subcellular location is the cytoplasm. Functionally, the L3 protein is a component of the large subunit of cytoplasmic ribosomes. This is Large ribosomal subunit protein uL3 (rpl3) from Dictyostelium discoideum (Social amoeba).